Consider the following 513-residue polypeptide: MAKSIMIQGTMSSAGKSLLVTALCRILKQDGYKVAPFKSQNMALNSFITEDGYEMGRAQVVQAEAAGIKPSVLMNPILLKPTTDVGSQVIVNGEVRGNMTASNYFKYKKELIPEIMHSYQTLDKEYDIIVIEGAGSPAEINLKSEDIVNMGMARMANAPVLLVGDIDRGGVFAQLYGTVALLEEEERAMIKGMIINKFRGDVKILEPGLTMLSDRLSPIANIPFVGVVPYTTVDIEEEDSISERFLRKTAKKIDIAVIRLPRISNYTDFHNLERFPNVSVRYISKVSELLEPDMIILPGTKNTIDDLKFLRESGLEAAILKAESKDTLIFGICGGYQMLGEWLHDPYGVEGGGEIKGLSLLPINTVFAKEKVRKQNSGTLNKVAGMLSGLSGKTYQGYEIHMGESTWSSKVEEEKNNCFSNKDEENLEHNTITSVLISNGAHVYGTYLHGIFDEEGICKEIIGTLCKRKGIDFEEVYEFDYKQYKEEQYDKLADAVRSSLDMKKIYQIMEEGV.

The GATase cobBQ-type domain maps to 252-457 (KIDIAVIRLP…LHGIFDEEGI (206 aa)). The active-site Nucleophile is Cys333. His449 is a catalytic residue.

Belongs to the CobB/CobQ family. CobQ subfamily.

It participates in cofactor biosynthesis; adenosylcobalamin biosynthesis. Functionally, catalyzes amidations at positions B, D, E, and G on adenosylcobyrinic A,C-diamide. NH(2) groups are provided by glutamine, and one molecule of ATP is hydrogenolyzed for each amidation. In Lachnoclostridium phytofermentans (strain ATCC 700394 / DSM 18823 / ISDg) (Clostridium phytofermentans), this protein is Cobyric acid synthase.